The following is an 803-amino-acid chain: MGLIFQPLFWQYVATSYALMVLGFLDETVEKAIKSEGYCSRILRAQGGTRKEGYNEFSMRVEGDPEFYKPGNTYRVTILAVSPAYFRGFTLIALKEGKEGEKEEDHAGSFQIIDEEDTQFMSNCPVAVTESTPRRRTRIQVFWTAPSIGTGCVILKASIVQKKIIYFQDEGSLTKRMCELDLTLEGGNEKTIPDCCACGTAKYRLTFYGNWSEKAHPKDYPRRANHWSAIIGGSHSGEYVLWEYGQASDGVKQVAELGSPVKMEEEIRQKGDEVLTVIKAKAQWPAWQPLNVRAAPSAEFSVDRSRHLMSFLAMMGPSPDWNVGLTSEDLCTKECGWVQKVVQDLIPWDAGTDSGVTYESPNKPTIPQDKIRPLTSLDHPQSPSMTRGGPIIPIARVVIERIARKGEQCNIIPDNVDDIVADLVTEEKDEDDTPETCIYSNWSPWSACSSATCDKGKRMRQRMLKAQLDLSVPCPDTQDFEPCMGPGCSDDEASTCMMSEWITWSPCSASCGMGIEVRERYVKQFPEDGSLCKVPTEETEKCIVNEECEPSSCIVTEWAEWEECSATCRMGMKKRHRMIKMTPADGSMCKADTTEVEKCMMPECHTIPCVLSPWSEWSDCSVTCGKGTRTRQRMLKSPSELGDCNEELELKQVEKCMLPECPISCELTEWSYWSECNKSCGKGHMIRTRMITMEPQFGGAVCPETVQRKKCRLRKCQKSSGNERRHLKDAREKRRSEKIKEDSDGEQYPVCKMKPWTAWTECTKFCGGGIQERFMTVKKRFKSSQFTSCKDKKEIRACNVHPC.

The first 23 residues, 1–23 (MGLIFQPLFWQYVATSYALMVLG), serve as a signal peptide directing secretion. One can recognise a Reelin domain in the interval 24–190 (FLDETVEKAI…DLTLEGGNEK (167 aa)). Intrachain disulfides connect cysteine 39/cysteine 124, cysteine 152/cysteine 178, cysteine 195/cysteine 331, cysteine 196/cysteine 335, cysteine 198/cysteine 409, cysteine 437/cysteine 474, cysteine 448/cysteine 483, cysteine 453/cysteine 488, cysteine 496/cysteine 532, cysteine 507/cysteine 511, cysteine 542/cysteine 548, cysteine 553/cysteine 589, cysteine 564/cysteine 568, and cysteine 599/cysteine 604. In terms of domain architecture, Spondin spans 191-383 (TIPDCCACGT…LTSLDHPQSP (193 aa)). Residue asparagine 210 is glycosylated (N-linked (GlcNAc...) asparagine). Ca(2+)-binding residues include aspartate 320, aspartate 349, and aspartate 353. The interval 353 to 389 (DSGVTYESPNKPTIPQDKIRPLTSLDHPQSPSMTRGG) is disordered. The segment covering 354–365 (SGVTYESPNKPT) has biased composition (polar residues). TSP type-1 domains are found at residues 436-489 (TCIY…PGCS), 495-549 (TCMM…EECE), 552-605 (SCIV…PECH), 608-662 (PCVL…PECP), and 664-717 (SCEL…RKCQ). N-linked (GlcNAc...) asparagine glycosylation occurs at asparagine 677. The disordered stretch occupies residues 722 to 741 (NERRHLKDAREKRRSEKIKE). One can recognise a TSP type-1 6 domain in the interval 750–802 (VCKMKPWTAWTECTKFCGGGIQERFMTVKKRFKSSQFTSCKDKKEIRACNVHP).

In terms of tissue distribution, expressed at high levels in the floor plate.

The protein resides in the secreted. The protein localises to the extracellular space. It is found in the extracellular matrix. Its function is as follows. Promotes the attachment of spinal cord and sensory neuron cells and the outgrowth of neurites in vitro. May contribute to the growth and guidance of axons in both the spinal cord and the PNS. In Xenopus laevis (African clawed frog), this protein is Spondin-1 (spon1).